We begin with the raw amino-acid sequence, 1126 residues long: Carbamoyl phosphate synthase large chain (1126 aa).

The segment at 1–402 (MPKRTDIKSV…SLGKAMRSID (402 aa)) is carboxyphosphate synthetic domain. ATP contacts are provided by Arg-129, Arg-169, Gly-175, Gly-176, Glu-208, Ile-210, Glu-215, Gly-241, Val-242, His-243, Gln-285, and Glu-299. One can recognise an ATP-grasp 1 domain in the interval 133-328 (KKVVEEAGAE…IAKIATKLAL (196 aa)). Mg(2+) is bound by residues Gln-285, Glu-299, and Asn-301. Mn(2+) contacts are provided by Gln-285, Glu-299, and Asn-301. Residues 403-551 (KRHMGFNWDG…YYYSCYADET (149 aa)) are oligomerization domain. The segment at 552-962 (ELRPRDREAV…AFAKSQLAAY (411 aa)) is carbamoyl phosphate synthetic domain. In terms of domain architecture, ATP-grasp 2 spans 681-881 (GEVLKKADMN…LAKAAARIMV (201 aa)). Residues Arg-717, Lys-765, Leu-767, Glu-772, Gly-797, Val-798, His-799, Ser-800, Gln-840, and Glu-852 each contribute to the ATP site. Residues Gln-840, Glu-852, and Asn-854 each contribute to the Mg(2+) site. Gln-840, Glu-852, and Asn-854 together coordinate Mn(2+). The tract at residues 963 to 1126 (EGGLPTSGNV…TQLFELESRD (164 aa)) is allosteric domain. The MGS-like domain occupies 964–1126 (GGLPTSGNVF…TQLFELESRD (163 aa)).

This sequence belongs to the CarB family. In terms of assembly, composed of two chains; the small (or glutamine) chain promotes the hydrolysis of glutamine to ammonia, which is used by the large (or ammonia) chain to synthesize carbamoyl phosphate. Tetramer of heterodimers (alpha,beta)4. It depends on Mg(2+) as a cofactor. Mn(2+) is required as a cofactor.

It carries out the reaction hydrogencarbonate + L-glutamine + 2 ATP + H2O = carbamoyl phosphate + L-glutamate + 2 ADP + phosphate + 2 H(+). It catalyses the reaction hydrogencarbonate + NH4(+) + 2 ATP = carbamoyl phosphate + 2 ADP + phosphate + 2 H(+). Its pathway is amino-acid biosynthesis; L-arginine biosynthesis; carbamoyl phosphate from bicarbonate: step 1/1. The protein operates within pyrimidine metabolism; UMP biosynthesis via de novo pathway; (S)-dihydroorotate from bicarbonate: step 1/3. In terms of biological role, large subunit of the glutamine-dependent carbamoyl phosphate synthetase (CPSase). CPSase catalyzes the formation of carbamoyl phosphate from the ammonia moiety of glutamine, carbonate, and phosphate donated by ATP, constituting the first step of 2 biosynthetic pathways, one leading to arginine and/or urea and the other to pyrimidine nucleotides. The large subunit (synthetase) binds the substrates ammonia (free or transferred from glutamine from the small subunit), hydrogencarbonate and ATP and carries out an ATP-coupled ligase reaction, activating hydrogencarbonate by forming carboxy phosphate which reacts with ammonia to form carbamoyl phosphate. This is Carbamoyl phosphate synthase large chain from Bifidobacterium adolescentis (strain ATCC 15703 / DSM 20083 / NCTC 11814 / E194a).